Here is an 86-residue protein sequence, read N- to C-terminus: Neurotoxin LmNaTx35.2 (86 aa).

The signal sequence occupies residues 1–21 (MQLKIQLLMLVLMTVLTGVLG). In terms of domain architecture, LCN-type CS-alpha/beta spans 22 to 85 (KDGYVVHEDT…VYGDKGTYCW (64 aa)). Intrachain disulfides connect Cys-33-Cys-84, Cys-37-Cys-60, Cys-46-Cys-65, and Cys-50-Cys-67.

This sequence belongs to the long (4 C-C) scorpion toxin superfamily. Sodium channel inhibitor family. Alpha subfamily. In terms of tissue distribution, expressed by the venom gland.

It is found in the secreted. Functionally, binds voltage-independently at site-3 of voltage-gated sodium channels (Nav) and inhibits the inactivation of the activated channels, thereby blocking neuronal transmission. This is Neurotoxin LmNaTx35.2 from Lychas mucronatus (Chinese swimming scorpion).